Reading from the N-terminus, the 447-residue chain is tRNA-2-methylthio-N(6)-dimethylallyladenosine synthase (447 aa).

The region spanning 3–120 is the MTTase N-terminal domain; the sequence is KKLYIETHGC…LPEMIDAART (118 aa). [4Fe-4S] cluster-binding residues include C12, C49, C83, C157, C161, and C164. Positions 143–375 constitute a Radical SAM core domain; sequence RVDGPSAFVS…QHRINQYGFE (233 aa). Residues 378–442 enclose the TRAM domain; the sequence is RRMVGTVQRI…PHSLRGTLLD (65 aa).

It belongs to the methylthiotransferase family. MiaB subfamily. As to quaternary structure, monomer. [4Fe-4S] cluster serves as cofactor.

The protein localises to the cytoplasm. It catalyses the reaction N(6)-dimethylallyladenosine(37) in tRNA + (sulfur carrier)-SH + AH2 + 2 S-adenosyl-L-methionine = 2-methylsulfanyl-N(6)-dimethylallyladenosine(37) in tRNA + (sulfur carrier)-H + 5'-deoxyadenosine + L-methionine + A + S-adenosyl-L-homocysteine + 2 H(+). Catalyzes the methylthiolation of N6-(dimethylallyl)adenosine (i(6)A), leading to the formation of 2-methylthio-N6-(dimethylallyl)adenosine (ms(2)i(6)A) at position 37 in tRNAs that read codons beginning with uridine. This chain is tRNA-2-methylthio-N(6)-dimethylallyladenosine synthase, found in Ectopseudomonas mendocina (strain ymp) (Pseudomonas mendocina).